Here is a 91-residue protein sequence, read N- to C-terminus: Large ribosomal subunit protein bL27 (91 aa).

This sequence belongs to the bacterial ribosomal protein bL27 family.

This is Large ribosomal subunit protein bL27 from Chromobacterium violaceum (strain ATCC 12472 / DSM 30191 / JCM 1249 / CCUG 213 / NBRC 12614 / NCIMB 9131 / NCTC 9757 / MK).